Consider the following 186-residue polypeptide: uncharacterized protein (186 aa).

The signal sequence occupies residues 1–18; the sequence is MNKFLFAAALIVSGLLVG. C19 carries N-palmitoyl cysteine lipidation. The S-diacylglycerol cysteine moiety is linked to residue C19.

It localises to the cell membrane. This is an uncharacterized protein from Escherichia coli (strain K12).